The chain runs to 275 residues: Dermonecrotic toxin LhSicTox-alphaVI1i (275 aa).

His-5 is an active-site residue. Positions 25 and 27 each coordinate Mg(2+). Catalysis depends on His-41, which acts as the Nucleophile. 2 disulfides stabilise this stretch: Cys-45–Cys-51 and Cys-47–Cys-192. Asp-85 serves as a coordination point for Mg(2+).

The protein belongs to the arthropod phospholipase D family. Class II subfamily. Mg(2+) is required as a cofactor. Expressed by the venom gland.

Its subcellular location is the secreted. It catalyses the reaction an N-(acyl)-sphingosylphosphocholine = an N-(acyl)-sphingosyl-1,3-cyclic phosphate + choline. The enzyme catalyses an N-(acyl)-sphingosylphosphoethanolamine = an N-(acyl)-sphingosyl-1,3-cyclic phosphate + ethanolamine. The catalysed reaction is a 1-acyl-sn-glycero-3-phosphocholine = a 1-acyl-sn-glycero-2,3-cyclic phosphate + choline. It carries out the reaction a 1-acyl-sn-glycero-3-phosphoethanolamine = a 1-acyl-sn-glycero-2,3-cyclic phosphate + ethanolamine. Dermonecrotic toxins cleave the phosphodiester linkage between the phosphate and headgroup of certain phospholipids (sphingolipid and lysolipid substrates), forming an alcohol (often choline) and a cyclic phosphate. This toxin acts on sphingomyelin (SM). It may also act on ceramide phosphoethanolamine (CPE), lysophosphatidylcholine (LPC) and lysophosphatidylethanolamine (LPE), but not on lysophosphatidylserine (LPS), and lysophosphatidylglycerol (LPG). It acts by transphosphatidylation, releasing exclusively cyclic phosphate products as second products. Induces dermonecrosis, hemolysis, increased vascular permeability, edema, inflammatory response, and platelet aggregation. The polypeptide is Dermonecrotic toxin LhSicTox-alphaVI1i (Loxosceles hirsuta (Recluse spider)).